A 563-amino-acid chain; its full sequence is Septation ring formation regulator EzrA (563 aa).

Over 1–2 (ME) the chain is Extracellular. A helical transmembrane segment spans residues 3–21 (LVIGLLVILLALFAAGYFF). Topologically, residues 22–563 (RKKIYTEIDR…KKIKADQSAS (542 aa)) are cytoplasmic. 3 coiled-coil regions span residues 133 to 159 (EEKS…AYSH), 243 to 276 (KGYK…ELDV), and 309 to 529 (SKMP…ERLF).

It belongs to the EzrA family.

The protein localises to the cell membrane. Negative regulator of FtsZ ring formation; modulates the frequency and position of FtsZ ring formation. Inhibits FtsZ ring formation at polar sites. Interacts either with FtsZ or with one of its binding partners to promote depolymerization. The polypeptide is Septation ring formation regulator EzrA (Bacillus velezensis (strain DSM 23117 / BGSC 10A6 / LMG 26770 / FZB42) (Bacillus amyloliquefaciens subsp. plantarum)).